The chain runs to 163 residues: Staphylokinase (163 aa).

The N-terminal stretch at 1 to 27 (MLKRSLLFLTVLLLLFSFSSITNEVSA) is a signal peptide.

It belongs to the staphylokinase family.

The protein localises to the secreted. In terms of biological role, potent plasminogen activator that converts plasminogen into plasmin. It forms a 1:1 complex with plasmin, which in turn activates other plasminogen molecules. The sequence is that of Staphylokinase (sak) from Staphylococcus aureus (strain MW2).